The following is a 405-amino-acid chain: Phosphoglycerate kinase (405 aa).

Residues 21-23, Arg-36, 59-62, Arg-119, and Arg-161 contribute to the substrate site; these read DFN and HLGR. ATP contacts are provided by residues Lys-212, Gly-301, Glu-332, and 361–364; that span reads GGDS.

It belongs to the phosphoglycerate kinase family. Monomer.

It is found in the cytoplasm. The catalysed reaction is (2R)-3-phosphoglycerate + ATP = (2R)-3-phospho-glyceroyl phosphate + ADP. Its pathway is carbohydrate degradation; glycolysis; pyruvate from D-glyceraldehyde 3-phosphate: step 2/5. The polypeptide is Phosphoglycerate kinase (Leuconostoc mesenteroides subsp. mesenteroides (strain ATCC 8293 / DSM 20343 / BCRC 11652 / CCM 1803 / JCM 6124 / NCDO 523 / NBRC 100496 / NCIMB 8023 / NCTC 12954 / NRRL B-1118 / 37Y)).